Reading from the N-terminus, the 174-residue chain is Shikimate kinase 2 (174 aa).

12–17 (GCGKTT) is a binding site for ATP. Mg(2+) contacts are provided by threonine 16 and aspartate 32. 3 residues coordinate substrate: aspartate 34, arginine 58, and glycine 79. An LID domain region spans residues 112 to 126 (QAAPEEDLRPTLTGK). Arginine 120 provides a ligand contact to ATP. Arginine 139 is a substrate binding site.

This sequence belongs to the shikimate kinase family. AroL subfamily. As to quaternary structure, monomer. Mg(2+) is required as a cofactor.

The protein localises to the cytoplasm. It catalyses the reaction shikimate + ATP = 3-phosphoshikimate + ADP + H(+). It functions in the pathway metabolic intermediate biosynthesis; chorismate biosynthesis; chorismate from D-erythrose 4-phosphate and phosphoenolpyruvate: step 5/7. Its function is as follows. Catalyzes the specific phosphorylation of the 3-hydroxyl group of shikimic acid using ATP as a cosubstrate. In Escherichia coli O81 (strain ED1a), this protein is Shikimate kinase 2.